Consider the following 313-residue polypeptide: Protochlorophyllide reductase (313 aa).

This sequence belongs to the short-chain dehydrogenases/reductases (SDR) family. POR subfamily.

It localises to the plastid. Its subcellular location is the chloroplast. It carries out the reaction chlorophyllide a + NADP(+) = protochlorophyllide a + NADPH + H(+). Its pathway is porphyrin-containing compound metabolism; chlorophyll biosynthesis. Functionally, phototransformation of protochlorophyllide (Pchlide) to chlorophyllide (Chlide). This chain is Protochlorophyllide reductase, found in Avena sativa (Oat).